Consider the following 259-residue polypeptide: (3R)-3-hydroxyacyl-CoA dehydrogenase (259 aa).

NAD(+) is bound by residues 13–21 (LVTGAGSGI) and 40–41 (DL). Residue Ser-58 is modified to Phosphoserine. The residue at position 66 (Lys-66) is an N6-acetyllysine. 72–74 (ADV) is a binding site for NAD(+). Ser-154 is a binding site for substrate. At Lys-158 the chain carries N6-succinyllysine. Catalysis depends on Tyr-167, which acts as the Proton acceptor. NAD(+)-binding positions include 167-171 (YASSK) and 200-202 (IAT). Lys-171 bears the N6-succinyllysine mark.

It belongs to the short-chain dehydrogenases/reductases (SDR) family. In terms of assembly, heterotetramer with CBR4; contains two molecules of HSD17B8 and CBR4. In terms of tissue distribution, kidney, liver, testis, ovary and spleen. Oviduct, uterus, mammary gland, vagina, prostate, clitoral gland and moderately heart, dorsal skin, brain and lung.

It is found in the mitochondrion matrix. It catalyses the reaction a (3R)-3-hydroxyacyl-CoA + NAD(+) = a 3-oxoacyl-CoA + NADH + H(+). It carries out the reaction 17beta-estradiol + NAD(+) = estrone + NADH + H(+). The catalysed reaction is testosterone + NAD(+) = androst-4-ene-3,17-dione + NADH + H(+). The enzyme catalyses 17beta-hydroxy-5alpha-androstan-3-one + NAD(+) = 5alpha-androstan-3,17-dione + NADH + H(+). The protein operates within lipid metabolism; fatty acid biosynthesis. It functions in the pathway steroid biosynthesis; estrogen biosynthesis. It participates in lipid metabolism; mitochondrial fatty acid beta-oxidation. Its function is as follows. Required for the solubility and assembly of the heterotetramer 3-ketoacyl-[acyl carrier protein] (ACP) reductase functional complex (KAR or KAR1) that forms part of the mitochondrial fatty acid synthase (mtFAS). Alpha-subunit of the KAR complex, acts as scaffold protein, required for the stability of carbonyl reductase type-4 (CBR4, beta-subunit of the KAR complex) and for its 3-ketoacyl-ACP reductase activity, thereby participating in mitochondrial fatty acid biosynthesis. Catalyzes the NAD-dependent conversion of (3R)-3-hydroxyacyl-CoA into 3-ketoacyl-CoA (3-oxoacyl-CoA) with no chain length preference, this enzymatic activity is not needed for the KAR function. Prefers (3R)-3-hydroxyacyl-CoA over (3S)-3-hydroxyacyl-CoA and displays enzymatic activity only in the presence of NAD(+)(H). Cooperates with enoyl-CoA hydratase 1 in mitochondria, together they constitute an alternative route to the auxiliary enzyme pathways for the breakdown of Z-PUFA (cis polyunsaturated fatty acid) enoyl-esters. NAD-dependent 17-beta-hydroxysteroid dehydrogenase with highest activity towards estradiol. It efficiently catalyzes the oxidation of estradiol (E2), testosterone, and dihydrotestosterone. Primarily an oxidative enzyme, it can switch to a reductive mode determined in the appropriate physiologic milieu and catalyze the reduction of estrone (E1) to form biologically active estradiol (E2). The polypeptide is (3R)-3-hydroxyacyl-CoA dehydrogenase (Hsd17b8) (Mus musculus (Mouse)).